A 177-amino-acid polypeptide reads, in one-letter code: Large ribosomal subunit protein uL6 (177 aa).

This sequence belongs to the universal ribosomal protein uL6 family. Part of the 50S ribosomal subunit.

Functionally, this protein binds to the 23S rRNA, and is important in its secondary structure. It is located near the subunit interface in the base of the L7/L12 stalk, and near the tRNA binding site of the peptidyltransferase center. This is Large ribosomal subunit protein uL6 from Rickettsia bellii (strain OSU 85-389).